A 382-amino-acid chain; its full sequence is Histidinol-phosphate aminotransferase (382 aa).

The disordered stretch occupies residues 1-28 (MTSAPRPRPTLDDLPLREDLRGKSPYGA). The span at 9 to 22 (PTLDDLPLREDLRG) shows a compositional bias: basic and acidic residues. An N6-(pyridoxal phosphate)lysine modification is found at Lys233.

It belongs to the class-II pyridoxal-phosphate-dependent aminotransferase family. Histidinol-phosphate aminotransferase subfamily. As to quaternary structure, homodimer. The cofactor is pyridoxal 5'-phosphate.

The catalysed reaction is L-histidinol phosphate + 2-oxoglutarate = 3-(imidazol-4-yl)-2-oxopropyl phosphate + L-glutamate. It participates in amino-acid biosynthesis; L-histidine biosynthesis; L-histidine from 5-phospho-alpha-D-ribose 1-diphosphate: step 7/9. The polypeptide is Histidinol-phosphate aminotransferase (Mycobacterium marinum (strain ATCC BAA-535 / M)).